The chain runs to 457 residues: Cell division protein FtsZ (457 aa).

Residues 26–30 (GGGGN), 115–117 (GTG), Glu146, Lys150, and Asp193 each bind GTP. Residues 429-447 (KKDVVRSEESERPAFESER) are compositionally biased toward basic and acidic residues. The disordered stretch occupies residues 429-457 (KKDVVRSEESERPAFESERSSSPTTISFN). Over residues 448-457 (SSSPTTISFN) the composition is skewed to polar residues.

It belongs to the FtsZ family. In terms of assembly, homodimer. Polymerizes to form a dynamic ring structure in a strictly GTP-dependent manner. Interacts directly with several other division proteins.

The protein localises to the cytoplasm. Its function is as follows. Essential cell division protein that forms a contractile ring structure (Z ring) at the future cell division site. The regulation of the ring assembly controls the timing and the location of cell division. One of the functions of the FtsZ ring is to recruit other cell division proteins to the septum to produce a new cell wall between the dividing cells. Binds GTP and shows GTPase activity. This is Cell division protein FtsZ from Porphyromonas gingivalis (strain ATCC BAA-308 / W83).